A 249-amino-acid polypeptide reads, in one-letter code: Small ribosomal subunit protein uS5 (249 aa).

Residues 1 to 14 are compositionally biased toward basic and acidic residues; the sequence is MSAEAPKRQFGDRR. Residues 1-29 form a disordered region; it reads MSAEAPKRQFGDRRRGGRRGGRRDGEEKG. In terms of domain architecture, S5 DRBM spans 71 to 134; that stretch reads LKDDVMKIRS…VIAKLSIIPI (64 aa).

It belongs to the universal ribosomal protein uS5 family. As to quaternary structure, component of the small ribosomal subunit. Mature ribosomes consist of a small (40S) and a large (60S) subunit. The 40S subunit contains about 32 different proteins and 1 molecule of RNA (18S). The 60S subunit contains 45 different proteins and 3 molecules of RNA (25S, 5.8S and 5S).

The protein resides in the cytoplasm. Functionally, component of the ribosome, a large ribonucleoprotein complex responsible for the synthesis of proteins in the cell. The small ribosomal subunit (SSU) binds messenger RNAs (mRNAs) and translates the encoded message by selecting cognate aminoacyl-transfer RNA (tRNA) molecules. The large subunit (LSU) contains the ribosomal catalytic site termed the peptidyl transferase center (PTC), which catalyzes the formation of peptide bonds, thereby polymerizing the amino acids delivered by tRNAs into a polypeptide chain. The nascent polypeptides leave the ribosome through a tunnel in the LSU and interact with protein factors that function in enzymatic processing, targeting, and the membrane insertion of nascent chains at the exit of the ribosomal tunnel. RPS2 is important for the assembly and function of the 40S ribosomal subunitand is nvolved in nucleolar processing of pre-18S ribosomal RNA and ribosome assembly. The protein is Small ribosomal subunit protein uS5 (RPS21) of Candida albicans (strain SC5314 / ATCC MYA-2876) (Yeast).